We begin with the raw amino-acid sequence, 422 residues long: Steroid hormone receptor ERR1 (422 aa).

A disordered region spans residues 1-67 (MSSQVVGIEP…GAGPGEQGGG (67 aa)). Phosphoserine is present on residues Ser19 and Ser22. Residues 58–67 (GAGPGEQGGG) are compositionally biased toward gly residues. Positions 76 to 151 (KRLCLVCGDV…VGMLKEGVRL (76 aa)) form a DNA-binding region, nuclear receptor. 2 consecutive NR C4-type zinc fingers follow at residues 79 to 99 (CLVC…CEAC) and 115 to 134 (CPAS…CQAC). 4 positions are modified to N6-acetyllysine; by PCAF/KAT2B: Lys129, Lys138, Lys160, and Lys162. Residues Lys189 and Lys402 each participate in a glycyl lysine isopeptide (Lys-Gly) (interchain with G-Cter in SUMO2) cross-link. Positions 192 to 420 (PVNALVSHLL…KLFLEMLEAM (229 aa)) constitute an NR LBD domain.

Belongs to the nuclear hormone receptor family. NR3 subfamily. As to quaternary structure, binds DNA as a monomer or a homodimer. Interacts (via the AF2 domain) with coactivator PPARGC1A (via the L3 motif); the interaction greatly enhances transcriptional activity of genes involved in energy metabolism. Interacts with PIAS4; the interaction enhances sumoylation. Interacts with MAPK15; promotes re-localization of ESRRA to the cytoplasm through a XPO1-dependent mechanism then inhibits ESRRA transcriptional activity. Post-translationally, phosphorylation on Ser-19 enhances sumoylation on Lys-14 increasing repression of transcriptional activity. Sumoylated with SUMO2. Main site is Lys-14 which is enhanced by phosphorylation on Ser-19, cofactor activation, and by interaction with PIAS4. Sumoylation enhances repression of transcriptional activity, but has no effect on subcellular location nor on DNA binding. In terms of processing, reversibly acetylated. Acetylation by PCAF/KAT2 at Lys-129, Lys-138, Lys-160 and Lys-162 and PCAF/KAT2 decreases transcriptional activity probably by inhibiting DNA-binding activity; deacetylation involves SIRT1 and HDAC8 and increases DNA-binding.

It localises to the nucleus. The protein resides in the cytoplasm. Functionally, binds to an ERR-alpha response element (ERRE) containing a single consensus half-site, 5'-TNAAGGTCA-3'. Can bind to the medium-chain acyl coenzyme A dehydrogenase (MCAD) response element NRRE-1 and may act as an important regulator of MCAD promoter. May function as a modulator of the estrogen signaling pathway in the uterus. Induces the expression of PERM1 in the skeletal muscle. In Canis lupus familiaris (Dog), this protein is Steroid hormone receptor ERR1 (ESRRA).